We begin with the raw amino-acid sequence, 538 residues long: L-aspartate oxidase (538 aa).

FAD contacts are provided by residues 14-17, lysine 36, 43-50, and aspartate 223; these read SGAA and STYWAQGG. Arginine 290 serves as the catalytic Proton donor/acceptor. FAD-binding positions include glutamate 375 and 391–392; that span reads SL.

Belongs to the FAD-dependent oxidoreductase 2 family. NadB subfamily. The cofactor is FAD.

It localises to the cytoplasm. The catalysed reaction is L-aspartate + O2 = iminosuccinate + H2O2. The protein operates within cofactor biosynthesis; NAD(+) biosynthesis; iminoaspartate from L-aspartate (oxidase route): step 1/1. In terms of biological role, catalyzes the oxidation of L-aspartate to iminoaspartate, the first step in the de novo biosynthesis of NAD(+). The sequence is that of L-aspartate oxidase (nadB) from Pseudomonas aeruginosa (strain ATCC 15692 / DSM 22644 / CIP 104116 / JCM 14847 / LMG 12228 / 1C / PRS 101 / PAO1).